A 748-amino-acid chain; its full sequence is Peroxisomal membrane protein PEX14 (748 aa).

Disordered stretches follow at residues 1–138 and 190–228; these read MDND…LSPS and GNIN…NNNN. The Peroxisomal segment spans residues 1 to 277; the sequence is MDNDDINNNN…IAQLMMNNNR (277 aa). The segment covering 7 to 30 has biased composition (low complexity); that stretch reads NNNNNNNNNNNNNNNSQELDQQEQ. The stretch at 8 to 60 forms a coiled coil; it reads NNNNNNNNNNNNNNSQELDQQEQTQEEITKQRIQKRKEEAKRIMEERKKREQQ. Over residues 43 to 59 the composition is skewed to basic and acidic residues; the sequence is RKEEAKRIMEERKKREQ. The span at 86–104 shows a compositional bias: polar residues; that stretch reads PQRQQQYDDNDEPPQQQQY. Composition is skewed to low complexity over residues 122–131, 190–209, and 218–228; these read TTSSTASAAT, GNIN…NSIS, and NNNNNSSNNNN. Residues 241-277 are a coiled coil; sequence QQHQQQQQMALTQIQSYQKRLEADDQRIAQLMMNNNR. A helical transmembrane segment spans residues 278-300; that stretch reads FSWNSFLFSVTAIVGAASGLAYL. At 301–748 the chain is on the cytoplasmic side; it reads TSNYIIPFLN…INNTDSSVEK (448 aa). Residues 316–413 are a coiled coil; the sequence is KDASANMDKK…IGNKENSNNS (98 aa). Disordered regions lie at residues 406–673 and 685–748; these read NKEN…ETPY and KQGK…SVEK. Composition is skewed to low complexity over residues 409 to 424 and 445 to 476; these read NSNN…NNNN and STNN…PGSN. The span at 510–527 shows a compositional bias: polar residues; sequence SWQQKSSNPPSDLSNAND. Composition is skewed to low complexity over residues 528–542 and 569–611; these read KSSP…PTKP and TTTT…NNNN. Positions 612–627 are enriched in polar residues; the sequence is TTIASTSNESNNSKVE. Positions 628-661 are enriched in low complexity; sequence TTSNDSDKSTSPSSSSNNTTSTTATTTTITSAST. Basic and acidic residues predominate over residues 710 to 723; the sequence is SAKERPKKPWERDT. A compositionally biased stretch (polar residues) spans 724–748; that stretch reads LTSVTNNLSVEETQTINNTDSSVEK.

Belongs to the peroxin-14 family. In terms of assembly, interacts with PEX13; forming the PEX13-PEX14 docking complex. Interacts with PEX5 (via WxxxF/Y motifs).

The protein localises to the peroxisome membrane. Functionally, component of the PEX13-PEX14 docking complex, a translocon channel that specifically mediates the import of peroxisomal cargo proteins bound to PEX5 receptor. The PEX13-PEX14 docking complex forms a large import pore which can be opened to a diameter of about 9 nm. Mechanistically, PEX5 receptor along with cargo proteins associates with the PEX14 subunit of the PEX13-PEX14 docking complex in the cytosol, leading to the insertion of the receptor into the organelle membrane with the concomitant translocation of the cargo into the peroxisome matrix. The protein is Peroxisomal membrane protein PEX14 (pex14) of Dictyostelium discoideum (Social amoeba).